The primary structure comprises 88 residues: UPF0297 protein LACR_0137 (88 aa).

It belongs to the UPF0297 family.

This is UPF0297 protein LACR_0137 from Lactococcus lactis subsp. cremoris (strain SK11).